Reading from the N-terminus, the 86-residue chain is Trypsin inhibitor (86 aa).

2 disulfide bridges follow: cysteine 8–cysteine 65 and cysteine 49–cysteine 58.

In terms of biological role, serine protease inhibitor which is active against trypsin. Displays strong antifungal activity against a number of phytopathogenic fungi including M.melonis, A.cucumerina, A.solani, C.glaeosporioides and P.capsici. This Fagopyrum tataricum (Tartarian buckwheat) protein is Trypsin inhibitor.